Consider the following 316-residue polypeptide: tRNA pseudouridine synthase B (316 aa).

D38 (nucleophile) is an active-site residue. The PUA domain occupies 238-312 (YPEVIVKSSA…PVCVLARQAG (75 aa)).

The protein belongs to the pseudouridine synthase TruB family. Type 1 subfamily.

It carries out the reaction uridine(55) in tRNA = pseudouridine(55) in tRNA. Its function is as follows. Responsible for synthesis of pseudouridine from uracil-55 in the psi GC loop of transfer RNAs. This Pelotomaculum thermopropionicum (strain DSM 13744 / JCM 10971 / SI) protein is tRNA pseudouridine synthase B.